Reading from the N-terminus, the 529-residue chain is Peptide chain release factor 3 (529 aa).

A tr-type G domain is found at 11-280 (AKRRTFAIIS…GLIEWAPQPM (270 aa)). Residues 20–27 (SHPDAGKT), 88–92 (DTPGH), and 142–145 (NKLD) each bind GTP.

This sequence belongs to the TRAFAC class translation factor GTPase superfamily. Classic translation factor GTPase family. PrfC subfamily.

The protein localises to the cytoplasm. In terms of biological role, increases the formation of ribosomal termination complexes and stimulates activities of RF-1 and RF-2. It binds guanine nucleotides and has strong preference for UGA stop codons. It may interact directly with the ribosome. The stimulation of RF-1 and RF-2 is significantly reduced by GTP and GDP, but not by GMP. The sequence is that of Peptide chain release factor 3 from Enterobacter sp. (strain 638).